A 183-amino-acid chain; its full sequence is NRR repressor homolog 1 (183 aa).

Disordered stretches follow at residues 1–40 (MEGV…VVGG) and 66–183 (NGEE…PTDQ). A compositionally biased stretch (acidic residues) spans 31 to 40 (EEEEGAVVGG). Residues 70 to 79 (GAAGGDGDGA) show a composition bias toward gly residues. The span at 101-115 (FEFEEAAAGAGDDDA) shows a compositional bias: acidic residues. Positions 135-145 (AVEKRRTEKEA) are enriched in basic and acidic residues. Residues 150–161 (AEDDDDEQEGGE) are compositionally biased toward acidic residues. The span at 163–183 (VEGKEEHRPGRRVEAHGPTDQ) shows a compositional bias: basic and acidic residues.

This sequence belongs to the NPR1-interactor family. As to quaternary structure, interacts with NPR1/NH1. Interacts with NPR3/NH3.

Its subcellular location is the nucleus. Binds to and represses NPR1/NH1-mediated transcriptional activation of LG2 in vitro. This is NRR repressor homolog 1 from Oryza sativa subsp. japonica (Rice).